We begin with the raw amino-acid sequence, 676 residues long: Zinc finger CCCH domain-containing protein 38 (676 aa).

5 disordered regions span residues 1 to 134 (MEMS…DHLF), 172 to 217 (SSDY…RSSN), 245 to 307 (RKQP…SWID), 487 to 506 (SVQPNQATTQSNVVSSNPNQ), and 533 to 594 (IQEV…DPKG). Residues 12-21 (SKWDSKEDTH) are compositionally biased toward basic and acidic residues. The segment covering 58-79 (RVSQNNDNSYFSEQDGTRQQFV) has biased composition (polar residues). Basic and acidic residues-rich tracts occupy residues 101–110 (ARRDAGSYDR), 124–134 (EFNKRGSDHLF), and 192–212 (SEFTGEKETQRRDGGDGEGGF). The segment at 214-243 (RSSNIPCKFFAAGTGFCRNGKYCRFSHHVA) adopts a C3H1-type zinc-finger fold. Residues 251–262 (NNNNFYRQDNNN) are compositionally biased toward low complexity. A compositionally biased stretch (basic and acidic residues) spans 269–278 (KWNDVERLDN). Positions 538–562 (LDPKENGDKKTDEASKEEEGKKTGE) are enriched in basic and acidic residues. A compositionally biased stretch (acidic residues) spans 563 to 583 (DTNDAENVVDEDEDGDDDGSD). Over residues 584 to 594 (EENKKEKDPKG) the composition is skewed to basic and acidic residues.

In Arabidopsis thaliana (Mouse-ear cress), this protein is Zinc finger CCCH domain-containing protein 38.